The chain runs to 780 residues: ATP-dependent 6-phosphofructokinase, liver type (780 aa).

A2 is modified (N-acetylalanine). The tract at residues 2 to 390 (ATVDLEKLRM…NWKIYKLLAH (389 aa)) is N-terminal catalytic PFK domain 1. ATP contacts are provided by residues G25, 88–89 (RC), and 118–121 (GDGS). D119 contacts Mg(2+). Substrate is bound by residues 164–166 (SID), R201, 208–210 (MGR), E264, R292, and 298–301 (HVQR). The Proton acceptor role is filled by D166. S377 carries the post-translational modification Phosphoserine. The segment at 391–400 (QKVSKEKSNF) is interdomain linker. Positions 401-780 (SLAILNVGAP…RRTLSIDKGF (380 aa)) are C-terminal regulatory PFK domain 2. Beta-D-fructose 2,6-bisphosphate contacts are provided by residues R470, 527-531 (TISNN), R565, 572-574 (MGG), and E628. An O-linked (GlcNAc) serine glycan is attached at S529. Position 640 is a phosphotyrosine (Y640). Beta-D-fructose 2,6-bisphosphate contacts are provided by residues R654, 660-663 (HLQQ), and R734. At S775 the chain carries Phosphoserine.

Belongs to the phosphofructokinase type A (PFKA) family. ATP-dependent PFK group I subfamily. Eukaryotic two domain clade 'E' sub-subfamily. Homo- and heterotetramers. Phosphofructokinase (PFK) enzyme functions as a tetramer composed of different combinations of 3 types of subunits, called PFKM (M), PFKL (L) and PFKP (P). The composition of the PFK tetramer differs according to the tissue type it is present in. The kinetic and regulatory properties of the tetrameric enzyme are dependent on the subunit composition, hence can vary across tissues. It depends on Mg(2+) as a cofactor. GlcNAcylation at Ser-529 by OGT decreases enzyme activity, leading to redirect glucose flux through the oxidative pentose phosphate pathway. Glycosylation is stimulated by both hypoxia and glucose deprivation.

It localises to the cytoplasm. It carries out the reaction beta-D-fructose 6-phosphate + ATP = beta-D-fructose 1,6-bisphosphate + ADP + H(+). It functions in the pathway carbohydrate degradation; glycolysis; D-glyceraldehyde 3-phosphate and glycerone phosphate from D-glucose: step 3/4. With respect to regulation, allosterically activated by ADP, AMP, or fructose 2,6-bisphosphate, and allosterically inhibited by ATP or citrate. GlcNAcylation by OGT overcomes allosteric regulation. Functionally, catalyzes the phosphorylation of D-fructose 6-phosphate to fructose 1,6-bisphosphate by ATP, the first committing step of glycolysis. Negatively regulates the phagocyte oxidative burst in response to bacterial infection by controlling cellular NADPH biosynthesis and NADPH oxidase-derived reactive oxygen species. Upon macrophage activation, drives the metabolic switch toward glycolysis, thus preventing glucose turnover that produces NADPH via pentose phosphate pathway. The polypeptide is ATP-dependent 6-phosphofructokinase, liver type (Pfkl) (Rattus norvegicus (Rat)).